We begin with the raw amino-acid sequence, 309 residues long: DNA-directed RNA polymerase subunit alpha (309 aa).

Positions 1–227 (MTFQVECVES…ALFEPLKNVS (227 aa)) are alpha N-terminal domain (alpha-NTD). Residues 237–309 (EPTPESQTPI…GIKLQESKVS (73 aa)) form an alpha C-terminal domain (alpha-CTD) region.

It belongs to the RNA polymerase alpha chain family. In terms of assembly, in cyanobacteria the RNAP catalytic core is composed of 2 alpha, 1 beta, 1 beta', 1 gamma and 1 omega subunit. When a sigma factor is associated with the core the holoenzyme is formed, which can initiate transcription.

It catalyses the reaction RNA(n) + a ribonucleoside 5'-triphosphate = RNA(n+1) + diphosphate. Its function is as follows. DNA-dependent RNA polymerase catalyzes the transcription of DNA into RNA using the four ribonucleoside triphosphates as substrates. In Synechococcus elongatus (strain ATCC 33912 / PCC 7942 / FACHB-805) (Anacystis nidulans R2), this protein is DNA-directed RNA polymerase subunit alpha.